The chain runs to 921 residues: Probable TonB-dependent receptor NMB1497 (921 aa).

The signal sequence occupies residues 1-25 (MRSSFRLKPICFYLMGVTLYHYSYA). The 122-residue stretch at 53–174 (DKKVFTDARA…LAGSANLRTL (122 aa)) folds into the TBDR plug domain. Positions 185 to 921 (TYGLLLKGLT…TFLMTMSYKF (737 aa)) constitute a TBDR beta-barrel domain. The TonB C-terminal box signature appears at 904 to 921 (LTNFARGRTFLMTMSYKF).

This sequence belongs to the TonB-dependent receptor family.

It localises to the cell outer membrane. Its function is as follows. Probable receptor, TonB-dependent. The sequence is that of Probable TonB-dependent receptor NMB1497 from Neisseria meningitidis serogroup B (strain ATCC BAA-335 / MC58).